The following is a 344-amino-acid chain: Heptahelical transmembrane protein 3 (344 aa).

Residues 1–76 (MKRRRSAKKS…AFSWHNETLN (76 aa)) lie on the Cytoplasmic side of the membrane. The chain crosses the membrane as a helical span at residues 77–97 (IWTHLIGFGIFLWMTVVSCLE). The Extracellular portion of the chain corresponds to 98 to 147 (TTEISLAGVFNGMAGVRICLSSNQTLLHDSNVTHHISCLTSQGEAIPKWP). Residues 148–168 (WLVYLVGAMGCLICSSVSHLL) traverse the membrane as a helical segment. Residues 169-184 (ACHSKRFNVFFWRLDY) are Cytoplasmic-facing. A helical transmembrane segment spans residues 185 to 205 (AGISLMIVASFFAPIYYAFSC). Over 206–210 (HPNFR) the chain is Extracellular. A helical membrane pass occupies residues 211-231 (LLYLSSISILGLLAIITLLSP). At 232–244 (ALSTPRFRPFRAN) the chain is on the cytoplasmic side. A helical transmembrane segment spans residues 245-265 (LFLAMGSSAVIPATHVLCLYW). At 266–269 (DHPN) the chain is on the extracellular side. A helical membrane pass occupies residues 270 to 290 (VFIALGYEIATALSYFVGATF). Residues 291 to 312 (YVSRVPERWKPGAFDMAGHSHQ) lie on the Cytoplasmic side of the membrane. A helical transmembrane segment spans residues 313 to 333 (IFHVFVVMGALAHCVTTLLII). Topologically, residues 334-344 (DFSRASPSCGF) are extracellular.

Belongs to the ADIPOR family. In terms of tissue distribution, expressed in roots and flowers.

It is found in the membrane. Its function is as follows. May play a role in abiotic stress response. The chain is Heptahelical transmembrane protein 3 (HHP3) from Arabidopsis thaliana (Mouse-ear cress).